A 208-amino-acid chain; its full sequence is Pyridoxine/pyridoxamine 5'-phosphate oxidase (208 aa).

FMN-binding positions include 55–60, 70–71, Lys-76, Lys-77, and Gln-99; these read RMVLLK and YT. Lys-60 contributes to the substrate binding site. Positions 117, 121, and 125 each coordinate substrate. FMN contacts are provided by residues 134–135 and Trp-179; that span reads QS. 185-187 is a binding site for substrate; it reads RLH. Arg-189 serves as a coordination point for FMN.

This sequence belongs to the pyridoxamine 5'-phosphate oxidase family. As to quaternary structure, homodimer. Requires FMN as cofactor.

The enzyme catalyses pyridoxamine 5'-phosphate + O2 + H2O = pyridoxal 5'-phosphate + H2O2 + NH4(+). It catalyses the reaction pyridoxine 5'-phosphate + O2 = pyridoxal 5'-phosphate + H2O2. The protein operates within cofactor metabolism; pyridoxal 5'-phosphate salvage; pyridoxal 5'-phosphate from pyridoxamine 5'-phosphate: step 1/1. Its pathway is cofactor metabolism; pyridoxal 5'-phosphate salvage; pyridoxal 5'-phosphate from pyridoxine 5'-phosphate: step 1/1. In terms of biological role, catalyzes the oxidation of either pyridoxine 5'-phosphate (PNP) or pyridoxamine 5'-phosphate (PMP) into pyridoxal 5'-phosphate (PLP). This is Pyridoxine/pyridoxamine 5'-phosphate oxidase from Brucella abortus biovar 1 (strain 9-941).